The chain runs to 603 residues: Myotubularin (603 aa).

Residues S13 and S18 each carry the phosphoserine modification. Residues 29–97 (QDVSETVPRL…GVISRIEKMG (69 aa)) form the GRAM domain. A Myotubularin phosphatase domain is found at 163-538 (GWTVYNPVEE…RHLELWVNYY (376 aa)). The a 1,2-diacyl-sn-glycero-3-phospho-(1D-myo-inositol-3,5-bisphosphate) site is built by N288, N313, and I314. N288, N313, and I314 together coordinate a 1,2-diacyl-sn-glycero-3-phospho-(1D-myo-inositol-3-phosphate). C375 acts as the Phosphocysteine intermediate in catalysis. 8 residues coordinate a 1,2-diacyl-sn-glycero-3-phospho-(1D-myo-inositol-3,5-bisphosphate): S376, D377, G378, W379, D380, R381, K417, and R421. A 1,2-diacyl-sn-glycero-3-phospho-(1D-myo-inositol-3-phosphate) contacts are provided by S376, D377, G378, W379, D380, and R381. R421 provides a ligand contact to a 1,2-diacyl-sn-glycero-3-phospho-(1D-myo-inositol-3-phosphate). A Phosphothreonine modification is found at T495. The residue at position 588 (S588) is a Phosphoserine.

It belongs to the protein-tyrosine phosphatase family. Non-receptor class myotubularin subfamily. In terms of assembly, heterodimer with MTMR12. Interacts with KMT2A/MLL1 (via SET domain). Interacts with DES in skeletal muscle but not in cardiac muscle. Interacts with SPEG. In terms of tissue distribution, widely expressed with highest levels detected in heart and muscle and low levels in brain (at protein level). Expressed in skeletal muscles (at protein level).

It localises to the cytoplasm. The protein resides in the cell membrane. Its subcellular location is the cell projection. The protein localises to the filopodium. It is found in the ruffle. It localises to the late endosome. The protein resides in the myofibril. Its subcellular location is the sarcomere. It catalyses the reaction a 1,2-diacyl-sn-glycero-3-phospho-(1D-myo-inositol-3-phosphate) + H2O = a 1,2-diacyl-sn-glycero-3-phospho-(1D-myo-inositol) + phosphate. The enzyme catalyses a 1,2-diacyl-sn-glycero-3-phospho-(1D-myo-inositol-3,5-bisphosphate) + H2O = a 1,2-diacyl-sn-glycero-3-phospho-(1D-myo-inositol-5-phosphate) + phosphate. The catalysed reaction is 1,2-dioctanoyl-sn-glycero-3-phospho-(1-D-myo-inositol-3-phosphate) + H2O = 1,2-dioctanoyl-sn-glycero-3-phospho-(1D-myo-inositol) + phosphate. It carries out the reaction 1,2-dioctanoyl-sn-glycero-3-phospho-(1D-myo-inositol-3,5-bisphosphate) + H2O = 1,2-dioctanoyl-sn-glycero-3-phospho-(1D-myo-inositol-5-phosphate) + phosphate. It catalyses the reaction 1,2-dihexadecanoyl-sn-glycero-3-phospho-(1D-myo-inositol-3,5-phosphate) + H2O = 1,2-dihexadecanoyl-sn-glycero-3-phospho-(1D-myo-inositol-5-phosphate) + phosphate. Its activity is regulated as follows. Allosterically activated by phosphatidylinositol 5-phosphate (PI5P). Its function is as follows. Lipid phosphatase which dephosphorylates phosphatidylinositol 3-monophosphate (PI3P) and phosphatidylinositol 3,5-bisphosphate (PI(3,5)P2). Has also been shown to dephosphorylate phosphotyrosine- and phosphoserine-containing peptides. Negatively regulates EGFR degradation through regulation of EGFR trafficking from the late endosome to the lysosome. Plays a role in vacuolar formation and morphology. Regulates desmin intermediate filament assembly and architecture. Plays a role in mitochondrial morphology and positioning. Required for skeletal muscle maintenance but not for myogenesis. In skeletal muscles, stabilizes MTMR12 protein levels. The polypeptide is Myotubularin (Mus musculus (Mouse)).